Consider the following 65-residue polypeptide: Large ribosomal subunit protein bL35 (65 aa).

The protein belongs to the bacterial ribosomal protein bL35 family.

The chain is Large ribosomal subunit protein bL35 from Porphyromonas gingivalis (strain ATCC 33277 / DSM 20709 / CIP 103683 / JCM 12257 / NCTC 11834 / 2561).